Consider the following 337-residue polypeptide: Inositol 2-dehydrogenase (337 aa).

This sequence belongs to the Gfo/Idh/MocA family. Homotetramer.

The catalysed reaction is myo-inositol + NAD(+) = scyllo-inosose + NADH + H(+). Functionally, involved in the oxidation of myo-inositol (MI) to 2-keto-myo-inositol (2KMI or 2-inosose). This chain is Inositol 2-dehydrogenase, found in Ralstonia nicotianae (strain ATCC BAA-1114 / GMI1000) (Ralstonia solanacearum).